The following is a 163-amino-acid chain: MSGFIQAAKSLLLLEFVSAFFLAMRQFFSPKPTINYPYEKGFVSQRFRGEHALRRYPNGEERCIACKLCEAICPAQAITIEAGPRRNDGTRRTVRYDIDMVKCIYCGFCQEACPVEAIVEGPNFEFATETREELYYDKEKLLMNGDRWEREIARNILMDAPYR.

4Fe-4S ferredoxin-type domains lie at 53 to 83 and 94 to 123; these read LRRYPNGEERCIACKLCEAICPAQAITIEAG and VRYDIDMVKCIYCGFCQEACPVEAIVEGPN. [4Fe-4S] cluster contacts are provided by Cys-63, Cys-66, Cys-69, Cys-73, Cys-103, Cys-106, Cys-109, and Cys-113.

It belongs to the complex I 23 kDa subunit family. In terms of assembly, NDH-1 is composed of 14 different subunits. Subunits NuoA, H, J, K, L, M, N constitute the membrane sector of the complex. Requires [4Fe-4S] cluster as cofactor.

The protein localises to the cell inner membrane. It carries out the reaction a quinone + NADH + 5 H(+)(in) = a quinol + NAD(+) + 4 H(+)(out). NDH-1 shuttles electrons from NADH, via FMN and iron-sulfur (Fe-S) centers, to quinones in the respiratory chain. The immediate electron acceptor for the enzyme in this species is believed to be ubiquinone. Couples the redox reaction to proton translocation (for every two electrons transferred, four hydrogen ions are translocated across the cytoplasmic membrane), and thus conserves the redox energy in a proton gradient. The protein is NADH-quinone oxidoreductase subunit I of Bartonella tribocorum (strain CIP 105476 / IBS 506).